The sequence spans 790 residues: Phenylalanine--tRNA ligase beta subunit (790 aa).

The tRNA-binding domain maps to 39-154; the sequence is PDSLNTVVTG…ADTPLGESAC (116 aa). The 80-residue stretch at 404–483 folds into the B5 domain; it reads FSPLSLSVRP…FVQKTQKILP (80 aa). 4 residues coordinate Mg(2+): Asp457, Asp463, Glu466, and Glu467. One can recognise an FDX-ACB domain in the interval 694 to 790; it reads PIYPASSRDI…KLANIGQGNS (97 aa).

This sequence belongs to the phenylalanyl-tRNA synthetase beta subunit family. Type 1 subfamily. In terms of assembly, tetramer of two alpha and two beta subunits. The cofactor is Mg(2+).

It is found in the cytoplasm. The catalysed reaction is tRNA(Phe) + L-phenylalanine + ATP = L-phenylalanyl-tRNA(Phe) + AMP + diphosphate + H(+). This Chlamydia trachomatis serovar A (strain ATCC VR-571B / DSM 19440 / HAR-13) protein is Phenylalanine--tRNA ligase beta subunit.